A 151-amino-acid polypeptide reads, in one-letter code: Deoxyuridine 5'-triphosphate nucleotidohydrolase (151 aa).

Substrate contacts are provided by residues 70–72, Asn83, 87–89, and Met97; these read RSG and LID.

Belongs to the dUTPase family. The cofactor is Mg(2+).

The catalysed reaction is dUTP + H2O = dUMP + diphosphate + H(+). Its pathway is pyrimidine metabolism; dUMP biosynthesis; dUMP from dCTP (dUTP route): step 2/2. In terms of biological role, this enzyme is involved in nucleotide metabolism: it produces dUMP, the immediate precursor of thymidine nucleotides and it decreases the intracellular concentration of dUTP so that uracil cannot be incorporated into DNA. This Glaesserella parasuis serovar 5 (strain SH0165) (Haemophilus parasuis) protein is Deoxyuridine 5'-triphosphate nucleotidohydrolase.